A 148-amino-acid polypeptide reads, in one-letter code: Large ribosomal subunit protein uL22c (148 aa).

It belongs to the universal ribosomal protein uL22 family. In terms of assembly, part of the 50S ribosomal subunit.

The protein localises to the plastid. It is found in the chloroplast. This protein binds specifically to 23S rRNA. In terms of biological role, the globular domain of the protein is located near the polypeptide exit tunnel on the outside of the subunit, while an extended beta-hairpin is found that lines the wall of the exit tunnel in the center of the 70S ribosome. This chain is Large ribosomal subunit protein uL22c (rpl22), found in Triticum aestivum (Wheat).